A 38-amino-acid chain; its full sequence is Large ribosomal subunit protein bL36 (38 aa).

Belongs to the bacterial ribosomal protein bL36 family.

The polypeptide is Large ribosomal subunit protein bL36 (Thermotoga maritima (strain ATCC 43589 / DSM 3109 / JCM 10099 / NBRC 100826 / MSB8)).